Consider the following 201-residue polypeptide: Pyridoxal 5'-phosphate synthase subunit PdxT (201 aa).

51–53 (GES) contacts L-glutamine. Cys83 functions as the Nucleophile in the catalytic mechanism. L-glutamine is bound by residues Arg112 and 141–142 (IR). Catalysis depends on charge relay system residues His182 and Glu184.

It belongs to the glutaminase PdxT/SNO family. As to quaternary structure, in the presence of PdxS, forms a dodecamer of heterodimers. Only shows activity in the heterodimer.

The catalysed reaction is aldehydo-D-ribose 5-phosphate + D-glyceraldehyde 3-phosphate + L-glutamine = pyridoxal 5'-phosphate + L-glutamate + phosphate + 3 H2O + H(+). The enzyme catalyses L-glutamine + H2O = L-glutamate + NH4(+). It functions in the pathway cofactor biosynthesis; pyridoxal 5'-phosphate biosynthesis. In terms of biological role, catalyzes the hydrolysis of glutamine to glutamate and ammonia as part of the biosynthesis of pyridoxal 5'-phosphate. The resulting ammonia molecule is channeled to the active site of PdxS. The chain is Pyridoxal 5'-phosphate synthase subunit PdxT from Thermobifida fusca (strain YX).